Reading from the N-terminus, the 128-residue chain is Cytochrome c-type biogenesis protein CcmE (128 aa).

Residues 1 to 8 (MQKRVRNR) are Cytoplasmic-facing. A helical; Signal-anchor for type II membrane protein membrane pass occupies residues 9–29 (LITIIICFCSACLGISIILYN). Topologically, residues 30–128 (LEKNIVFFLP…KHDENYRPPQ (99 aa)) are extracellular. Residues His-120 and Tyr-124 each coordinate heme.

This sequence belongs to the CcmE/CycJ family.

It is found in the cell membrane. Functionally, heme chaperone required for the biogenesis of c-type cytochromes. Transiently binds heme delivered by CcmC and transfers the heme to apo-cytochromes in a process facilitated by CcmF and CcmH. The polypeptide is Cytochrome c-type biogenesis protein CcmE (Rickettsia africae (strain ESF-5)).